The primary structure comprises 546 residues: E3 ubiquitin-protein ligase NEURL1B (546 aa).

Residues 38–194 (APRFHAQAKG…ITDEVQLLES (157 aa)) enclose the NHR 1 domain. At Thr-199 the chain carries Phosphothreonine. One can recognise an NHR 2 domain in the interval 270-424 (ELRFHATRGP…GVAGQLRLLG (155 aa)). Residues 429–490 (SSETMTPSGS…FSAPEPTGSR (62 aa)) form a disordered region. Residues 457–471 (SSSASESSLVTAPSS) are compositionally biased toward low complexity. Residues 494-534 (CTVCFDSEVDTVIYTCGHMCLCHGCGLRLRRQARACCPICR) form an RING-type zinc finger.

Interacts with DLL1 and DLL4. As to expression, expressed in the limb buds and dorsal root ganglia. Expressed in brain and kidney and at low levels in the heart.

The protein localises to the cytoplasm. The catalysed reaction is S-ubiquitinyl-[E2 ubiquitin-conjugating enzyme]-L-cysteine + [acceptor protein]-L-lysine = [E2 ubiquitin-conjugating enzyme]-L-cysteine + N(6)-ubiquitinyl-[acceptor protein]-L-lysine.. Its pathway is protein modification; protein ubiquitination. Its function is as follows. E3 ubiquitin-protein ligase involved in regulation of the Notch pathway through influencing the stability and activity of several Notch ligands. The chain is E3 ubiquitin-protein ligase NEURL1B (Neurl1b) from Mus musculus (Mouse).